The primary structure comprises 459 residues: GTPase Der (459 aa).

2 consecutive EngA-type G domains span residues 4–169 (PLVA…PEVT) and 179–355 (IAVS…AAHR). GTP contacts are provided by residues 10 to 17 (GRPNVGKS), 57 to 61 (DTGGL), 120 to 123 (NKCE), 185 to 192 (GRPNVGKS), 232 to 236 (DTAGI), and 297 to 300 (NKWD). The KH-like domain maps to 356–441 (KRVPTAVVNE…PIRFLWRGKS (86 aa)).

It belongs to the TRAFAC class TrmE-Era-EngA-EngB-Septin-like GTPase superfamily. EngA (Der) GTPase family. As to quaternary structure, associates with the 50S ribosomal subunit.

Functionally, GTPase that plays an essential role in the late steps of ribosome biogenesis. The chain is GTPase Der from Synechococcus sp. (strain JA-2-3B'a(2-13)) (Cyanobacteria bacterium Yellowstone B-Prime).